We begin with the raw amino-acid sequence, 405 residues long: Threonine synthase (405 aa).

An N6-(pyridoxal phosphate)lysine modification is found at Lys-106. Pyridoxal 5'-phosphate is bound by residues Asn-132, 233–237 (GNAGN), and Thr-371.

The protein belongs to the threonine synthase family. Pyridoxal 5'-phosphate serves as cofactor.

The catalysed reaction is O-phospho-L-homoserine + H2O = L-threonine + phosphate. It functions in the pathway amino-acid biosynthesis; L-threonine biosynthesis; L-threonine from L-aspartate: step 5/5. Catalyzes the gamma-elimination of phosphate from L-phosphohomoserine and the beta-addition of water to produce L-threonine. In Methanocaldococcus jannaschii (strain ATCC 43067 / DSM 2661 / JAL-1 / JCM 10045 / NBRC 100440) (Methanococcus jannaschii), this protein is Threonine synthase (thrC).